Consider the following 366-residue polypeptide: MSTAVTMLTDTWSRRAKRFEIEGYAKILAIGTATPANWVDQTTYPDFYFRITNSQHLLEHKEKFRRICNKSNIRKRHMVLTEELLKKNPNLCTYNDASLNTRQDILVSEVPKLGKEAAMKAIKVWGRPISEITHLVFCTTSGVDMPGADFQLTKLLGLNSSVKRLMMYQQGCNAGAAMLRLAKDLAENNKGARVLVVCSEVMLSVFRGPSLQQEDNLLAQCLFGDGSAAIIIGTDPRPGLETPLFELISAAQTIIPDTDSHLKLHVREMGLTFHCSKAVPTFITQNVEDCLVKAFEPYGISDWNSIFWVLHPGGNAIVEGVEETLGLAPEKLRASRDVLSEYGNLTSACVLFILDEVRKKSKKDEQ.

Residue Cys-172 is part of the active site.

Belongs to the thiolase-like superfamily. Chalcone/stilbene synthases family.

The catalysed reaction is (E)-4-coumaroyl-CoA + 3 malonyl-CoA + 3 H(+) = 2',4,4',6'-tetrahydroxychalcone + 3 CO2 + 4 CoA. Its pathway is secondary metabolite biosynthesis; flavonoid biosynthesis. Functionally, the primary product of this enzyme is 4,2',4',6'-tetrahydroxychalcone (also termed naringenin-chalcone or chalcone) which can under specific conditions spontaneously isomerize into naringenin. The sequence is that of Chalcone synthase B (CHSB) from Ipomoea trifida (Morning glory).